The sequence spans 122 residues: Modulator protein MzrA (122 aa).

Topologically, residues 1–10 (MKILTRIPRR) are cytoplasmic. The chain crosses the membrane as a helical span at residues 11–31 (LLPWLLGGALALVAVSFAPAL). The Periplasmic segment spans residues 32-122 (LSHETVVQIR…NQDANRSIYS (91 aa)).

The protein belongs to the MzrA family. In terms of assembly, interacts with EnvZ.

It localises to the cell inner membrane. Functionally, modulates the activity of the EnvZ/OmpR two-component regulatory system, probably by directly modulating EnvZ enzymatic activity and increasing stability of phosphorylated OmpR. This Pantoea sp. (strain At-9b) protein is Modulator protein MzrA.